A 271-amino-acid polypeptide reads, in one-letter code: Tryptophan synthase alpha chain (271 aa).

Catalysis depends on proton acceptor residues E49 and D60.

Belongs to the TrpA family. In terms of assembly, tetramer of two alpha and two beta chains.

The catalysed reaction is (1S,2R)-1-C-(indol-3-yl)glycerol 3-phosphate + L-serine = D-glyceraldehyde 3-phosphate + L-tryptophan + H2O. The protein operates within amino-acid biosynthesis; L-tryptophan biosynthesis; L-tryptophan from chorismate: step 5/5. Functionally, the alpha subunit is responsible for the aldol cleavage of indoleglycerol phosphate to indole and glyceraldehyde 3-phosphate. The protein is Tryptophan synthase alpha chain of Burkholderia cenocepacia (strain HI2424).